The chain runs to 359 residues: Heat-inducible transcription repressor HrcA (359 aa).

The protein belongs to the HrcA family.

Negative regulator of class I heat shock genes (grpE-dnaK-dnaJ and groELS operons). Prevents heat-shock induction of these operons. The polypeptide is Heat-inducible transcription repressor HrcA (Roseiflexus sp. (strain RS-1)).